The primary structure comprises 187 residues: MNGDDAFAKRPRDDDKASEKRSKAFNDIATYFSKKEWEKMKYSEKISYVYMKRNYEAMTKLGFNVTLPPFMCNKQATDFQGNYFDNDRNRRIQVERPQMTFGRLQRIIPKIMPKKPAEEGNDSKGVSEASGPQNDGKQLAPGKANTSEKINKRSGPKRGRHAWTHRLRERNQLVIYEEIRDPEEDDE.

2 disordered regions span residues 1–21 (MNGDDAFAKRPRDDDKASEKR) and 109–187 (PKIM…EDDE). The KRAB-related domain occupies 20 to 83 (KRSKAFNDIA…KQATDFQGNY (64 aa)). A Phosphoserine modification is found at Ser123. A compositionally biased stretch (basic residues) spans 152-168 (KRSGPKRGRHAWTHRLR).

It belongs to the SSX family. Not detected in any normal or tumor tissues.

Could act as a modulator of transcription. The protein is Putative protein SSX8 of Homo sapiens (Human).